A 995-amino-acid chain; its full sequence is Bifunctional glutamine synthetase adenylyltransferase/adenylyl-removing enzyme (995 aa).

The adenylyl removase stretch occupies residues 1-487; sequence MNVTKPATQR…LHAKLFYQPL (487 aa). The adenylyl transferase stretch occupies residues 492–995; the sequence is APAGLEIAGR…KAVVRKVFGS (504 aa).

The protein belongs to the GlnE family. It depends on Mg(2+) as a cofactor.

The catalysed reaction is [glutamine synthetase]-O(4)-(5'-adenylyl)-L-tyrosine + phosphate = [glutamine synthetase]-L-tyrosine + ADP. The enzyme catalyses [glutamine synthetase]-L-tyrosine + ATP = [glutamine synthetase]-O(4)-(5'-adenylyl)-L-tyrosine + diphosphate. Its function is as follows. Involved in the regulation of glutamine synthetase GlnA, a key enzyme in the process to assimilate ammonia. When cellular nitrogen levels are high, the C-terminal adenylyl transferase (AT) inactivates GlnA by covalent transfer of an adenylyl group from ATP to specific tyrosine residue of GlnA, thus reducing its activity. Conversely, when nitrogen levels are low, the N-terminal adenylyl removase (AR) activates GlnA by removing the adenylyl group by phosphorolysis, increasing its activity. The regulatory region of GlnE binds the signal transduction protein PII (GlnB) which indicates the nitrogen status of the cell. This Mycobacterium marinum (strain ATCC BAA-535 / M) protein is Bifunctional glutamine synthetase adenylyltransferase/adenylyl-removing enzyme.